The following is a 944-amino-acid chain: Isoleucine--tRNA ligase (944 aa).

Positions 58–68 match the 'HIGH' region motif; it reads PYANGQIHIGH. L-isoleucyl-5'-AMP is bound at residue glutamate 568. The short motif at 609–613 is the 'KMSKS' region element; it reads KMSKS. Residue lysine 612 coordinates ATP. Cysteine 907, cysteine 910, cysteine 927, and cysteine 930 together coordinate Zn(2+).

This sequence belongs to the class-I aminoacyl-tRNA synthetase family. IleS type 1 subfamily. In terms of assembly, monomer. The cofactor is Zn(2+).

It is found in the cytoplasm. The catalysed reaction is tRNA(Ile) + L-isoleucine + ATP = L-isoleucyl-tRNA(Ile) + AMP + diphosphate. Catalyzes the attachment of isoleucine to tRNA(Ile). As IleRS can inadvertently accommodate and process structurally similar amino acids such as valine, to avoid such errors it has two additional distinct tRNA(Ile)-dependent editing activities. One activity is designated as 'pretransfer' editing and involves the hydrolysis of activated Val-AMP. The other activity is designated 'posttransfer' editing and involves deacylation of mischarged Val-tRNA(Ile). In Idiomarina loihiensis (strain ATCC BAA-735 / DSM 15497 / L2-TR), this protein is Isoleucine--tRNA ligase.